The chain runs to 888 residues: Lon protease homolog 2, peroxisomal (888 aa).

A Lon N-terminal domain is found at 11 to 255 (LAILPFRNKV…KATELVDRHL (245 aa)). 408-415 (GPPGVGKT) is an ATP binding site. A Lon proteolytic domain is found at 692 to 877 (VASAGVSVGL…EDVLENAFEG (186 aa)). Active-site residues include S783 and K826. The Microbody targeting signal motif lies at 886 to 888 (SKL).

Belongs to the peptidase S16 family.

The protein localises to the peroxisome matrix. It catalyses the reaction Hydrolysis of proteins in presence of ATP.. Its function is as follows. ATP-dependent serine protease that mediates the selective degradation of misfolded and unassembled polypeptides in the peroxisomal matrix. Necessary for type 2 peroxisome targeting signal (PTS2)-containing protein processing and facilitates peroxisome matrix protein import. The protein is Lon protease homolog 2, peroxisomal (LON2) of Arabidopsis thaliana (Mouse-ear cress).